The following is a 192-amino-acid chain: Ribosome hibernation promotion factor (192 aa).

The tract at residues 95-129 (RVNRKHKTHGEPEAFVAEVQEAPPENVDDVNAEPT) is disordered. Over residues 120-129 (NVDDVNAEPT) the composition is skewed to acidic residues.

It belongs to the HPF/YfiA ribosome-associated protein family. Long HPF subfamily. Interacts with 100S ribosomes.

It is found in the cytoplasm. Its function is as follows. Required for dimerization of active 70S ribosomes into 100S ribosomes in stationary phase; 100S ribosomes are translationally inactive and sometimes present during exponential growth. The chain is Ribosome hibernation promotion factor from Staphylococcus haemolyticus (strain JCSC1435).